Reading from the N-terminus, the 450-residue chain is Glutathione reductase (450 aa).

Positions 14, 15, 34, 41, 42, and 50 each coordinate FAD. Position 14 (Ser-14) interacts with glutathione. The cysteines at positions 42 and 47 are disulfide-linked. Residue Tyr-99 participates in glutathione binding. Position 115 (Ala-115) interacts with FAD. 6 residues coordinate NADP(+): Ala-175, Ile-178, Glu-181, Arg-198, Arg-204, and Gly-262. Asp-303 is a binding site for FAD. Glu-309 provides a ligand contact to NADP(+). FAD is bound at residue Thr-311. Arg-319 is a glutathione binding site. Val-342 contacts NADP(+). An FAD-binding site is contributed by His-439. The Proton acceptor role is filled by His-439.

It belongs to the class-I pyridine nucleotide-disulfide oxidoreductase family. As to quaternary structure, homodimer. Requires FAD as cofactor.

The protein resides in the cytoplasm. The enzyme catalyses 2 glutathione + NADP(+) = glutathione disulfide + NADPH + H(+). Its function is as follows. Catalyzes the reduction of glutathione disulfide (GSSG) to reduced glutathione (GSH). Constitutes the major mechanism to maintain a high GSH:GSSG ratio in the cytosol. The protein is Glutathione reductase (gor) of Escherichia coli (strain K12).